A 471-amino-acid chain; its full sequence is ATP synthase subunit beta (471 aa).

Glycine 154–threonine 161 is an ATP binding site.

The protein belongs to the ATPase alpha/beta chains family. As to quaternary structure, F-type ATPases have 2 components, CF(1) - the catalytic core - and CF(0) - the membrane proton channel. CF(1) has five subunits: alpha(3), beta(3), gamma(1), delta(1), epsilon(1). CF(0) has three main subunits: a(1), b(2) and c(9-12). The alpha and beta chains form an alternating ring which encloses part of the gamma chain. CF(1) is attached to CF(0) by a central stalk formed by the gamma and epsilon chains, while a peripheral stalk is formed by the delta and b chains.

Its subcellular location is the cell membrane. The catalysed reaction is ATP + H2O + 4 H(+)(in) = ADP + phosphate + 5 H(+)(out). Produces ATP from ADP in the presence of a proton gradient across the membrane. The catalytic sites are hosted primarily by the beta subunits. The protein is ATP synthase subunit beta of Mesomycoplasma hyopneumoniae (strain 232) (Mycoplasma hyopneumoniae).